Reading from the N-terminus, the 502-residue chain is Galactose/methyl galactoside import ATP-binding protein MglA (502 aa).

2 consecutive ABC transporter domains span residues leucine 10 to glutamate 245 and asparagine 255 to leucine 502. Residue glycine 42–serine 49 coordinates ATP.

Belongs to the ABC transporter superfamily. Galactose/methyl galactoside importer (TC 3.A.1.2.3) family. As to quaternary structure, the complex is composed of one ATP-binding protein (MglA), two transmembrane proteins (MglC) and a solute-binding protein (MglB).

Its subcellular location is the cell inner membrane. It carries out the reaction D-galactose(out) + ATP + H2O = D-galactose(in) + ADP + phosphate + H(+). The enzyme catalyses methyl beta-D-galactoside(out) + ATP + H2O = methyl beta-D-galactoside(in) + ADP + phosphate + H(+). Functionally, part of the ABC transporter complex MglABC involved in galactose/methyl galactoside import. Responsible for energy coupling to the transport system. This Vibrio vulnificus (strain CMCP6) protein is Galactose/methyl galactoside import ATP-binding protein MglA.